The chain runs to 294 residues: Large ribosomal subunit protein uL18 (294 aa).

The tract at residues Arg-247–Lys-275 is disordered. Positions Lys-256–Lys-267 are enriched in basic residues.

This sequence belongs to the universal ribosomal protein uL18 family. Component of the large ribosomal subunit (LSU).

It localises to the cytoplasm. The protein localises to the nucleus. Its function is as follows. Component of the ribosome, a large ribonucleoprotein complex responsible for the synthesis of proteins in the cell. The small ribosomal subunit (SSU) binds messenger RNAs (mRNAs) and translates the encoded message by selecting cognate aminoacyl-transfer RNA (tRNA) molecules. The large subunit (LSU) contains the ribosomal catalytic site termed the peptidyl transferase center (PTC), which catalyzes the formation of peptide bonds, thereby polymerizing the amino acids delivered by tRNAs into a polypeptide chain. The nascent polypeptides leave the ribosome through a tunnel in the LSU and interact with protein factors that function in enzymatic processing, targeting, and the membrane insertion of nascent chains at the exit of the ribosomal tunnel. The protein is Large ribosomal subunit protein uL18 (rpl-5) of Caenorhabditis briggsae.